Consider the following 762-residue polypeptide: 5-methyltetrahydropteroyltriglutamate--homocysteine methyltransferase (762 aa).

Residues 18 to 21 (REWK) and Lys-112 each bind 5-methyltetrahydropteroyltri-L-glutamate. L-homocysteine is bound by residues 435–437 (IGS) and Glu-488. L-methionine-binding positions include 435–437 (IGS) and Glu-488. Residues 519–520 (RC) and Trp-565 contribute to the 5-methyltetrahydropteroyltri-L-glutamate site. Asp-603 serves as a coordination point for L-homocysteine. Asp-603 contributes to the L-methionine binding site. Residue Glu-609 coordinates 5-methyltetrahydropteroyltri-L-glutamate. Positions 645, 647, and 669 each coordinate Zn(2+). Residue His-698 is the Proton donor of the active site. Residue Cys-730 participates in Zn(2+) binding.

This sequence belongs to the vitamin-B12 independent methionine synthase family. Zn(2+) serves as cofactor.

It carries out the reaction 5-methyltetrahydropteroyltri-L-glutamate + L-homocysteine = tetrahydropteroyltri-L-glutamate + L-methionine. Its pathway is amino-acid biosynthesis; L-methionine biosynthesis via de novo pathway; L-methionine from L-homocysteine (MetE route): step 1/1. Catalyzes the transfer of a methyl group from 5-methyltetrahydrofolate to homocysteine resulting in methionine formation. The protein is 5-methyltetrahydropteroyltriglutamate--homocysteine methyltransferase of Bacillus velezensis (strain DSM 23117 / BGSC 10A6 / LMG 26770 / FZB42) (Bacillus amyloliquefaciens subsp. plantarum).